The following is a 211-amino-acid chain: FMN-dependent NADH:quinone oxidoreductase 2 (211 aa).

FMN is bound by residues S10 and 17 to 19 (SRS).

It belongs to the azoreductase type 1 family. Homodimer. FMN is required as a cofactor.

The catalysed reaction is 2 a quinone + NADH + H(+) = 2 a 1,4-benzosemiquinone + NAD(+). The enzyme catalyses N,N-dimethyl-1,4-phenylenediamine + anthranilate + 2 NAD(+) = 2-(4-dimethylaminophenyl)diazenylbenzoate + 2 NADH + 2 H(+). Functionally, quinone reductase that provides resistance to thiol-specific stress caused by electrophilic quinones. Also exhibits azoreductase activity. Catalyzes the reductive cleavage of the azo bond in aromatic azo compounds to the corresponding amines. The polypeptide is FMN-dependent NADH:quinone oxidoreductase 2 (Listeria monocytogenes serotype 4b (strain F2365)).